A 463-amino-acid polypeptide reads, in one-letter code: L-seryl-tRNA(Sec) selenium transferase (463 aa).

Lysine 295 carries the post-translational modification N6-(pyridoxal phosphate)lysine.

The protein belongs to the SelA family. In terms of assembly, homodecamer; pentamer of dimers. Binds only one seryl-tRNA(Sec) per dimer. Pyridoxal 5'-phosphate is required as a cofactor.

It localises to the cytoplasm. The enzyme catalyses L-seryl-tRNA(Sec) + selenophosphate + H(+) = L-selenocysteinyl-tRNA(Sec) + phosphate. It participates in aminoacyl-tRNA biosynthesis; selenocysteinyl-tRNA(Sec) biosynthesis; selenocysteinyl-tRNA(Sec) from L-seryl-tRNA(Sec) (bacterial route): step 1/1. Its function is as follows. Converts seryl-tRNA(Sec) to selenocysteinyl-tRNA(Sec) required for selenoprotein biosynthesis. This chain is L-seryl-tRNA(Sec) selenium transferase, found in Shigella flexneri.